A 445-amino-acid chain; its full sequence is Exodeoxyribonuclease 7 large subunit (445 aa).

This sequence belongs to the XseA family. In terms of assembly, heterooligomer composed of large and small subunits.

It is found in the cytoplasm. The enzyme catalyses Exonucleolytic cleavage in either 5'- to 3'- or 3'- to 5'-direction to yield nucleoside 5'-phosphates.. Functionally, bidirectionally degrades single-stranded DNA into large acid-insoluble oligonucleotides, which are then degraded further into small acid-soluble oligonucleotides. This is Exodeoxyribonuclease 7 large subunit from Limosilactobacillus reuteri (strain DSM 20016) (Lactobacillus reuteri).